The following is a 966-amino-acid chain: Polycystin-2 (966 aa).

The interval 1–106 is disordered; sequence MVNSRRVQPQ…DDDEVEGEEG (106 aa). At 1–217 the chain is on the cytoplasmic side; that stretch reads MVNSRRVQPQ…NANREKYLKS (217 aa). A compositionally biased stretch (gly residues) spans 30-44; the sequence is VAGGAGLAVPGGLGE. Basic and acidic residues predominate over residues 46 to 56; sequence RGLEIEMERIR. The span at 58–79 shows a compositional bias: low complexity; sequence AAARDPPAGASASPSPPLSSCS. 2 positions are modified to phosphoserine: Ser-72 and Ser-76. Residues 91 to 105 show a composition bias toward acidic residues; sequence EAEEDDDDDEVEGEE. The residue at position 135 (Arg-135) is an Omega-N-methylarginine. The interval 147–179 is disordered; sequence HLSGRRRRLEDQGAQCPSPAGGGDPLHRHLPLE. The chain crosses the membrane as a helical span at residues 218-239; it reads VLRELVTYLFFLVVLCILTYGM. The Extracellular segment spans residues 240 to 466; it reads MSSNVYYYTR…PVKLIRYVTA (227 aa). N-linked (GlcNAc...) asparagine glycans are attached at residues Asn-297, Asn-303, and Asn-326. Cys-329 and Cys-342 form a disulfide bridge. N-linked (GlcNAc...) asparagine glycosylation is found at Asn-360 and Asn-373. The helical transmembrane segment at 467–487 threads the bilayer; the sequence is FDFFLAACEIIFCFFIIYYVV. Topologically, residues 488 to 503 are cytoplasmic; it reads EEILEIRIHRLSYFRS. Residues 504 to 524 form a helical membrane-spanning segment; sequence FWNCLDVVIVVLSVVAMVINI. Residues 525–550 lie on the Extracellular side of the membrane; that stretch reads YRMSNAEGLLQFLEDQNSFPNFEHVA. The chain crosses the membrane as a helical span at residues 551-571; the sequence is YWQIQFNNISAVMVFLVWIKL. Gln-555 is a binding site for cholesterol. Residues 572 to 595 lie on the Cytoplasmic side of the membrane; sequence FKFINFNRTMSQLSTTMSRCAKDL. Residues 596–617 traverse the membrane as a helical segment; sequence FGFTIMFSIIFLAYAQLAYLVF. The Extracellular portion of the chain corresponds to 618–629; sequence GTQVDDFSTFQE. An intramembrane region (pore-forming) is located at residues 630–644; the sequence is CIFTQFRIILGDINF. Ca(2+) is bound at residue Leu-639. Residues 639–641 carry the Selectivity filter motif; sequence LGD. At 645 to 652 the chain is on the extracellular side; that stretch reads AEIEEANR. The helical transmembrane segment at 653–673 threads the bilayer; sequence VLGPLYFTTFVFFMFFILLNM. The Cytoplasmic portion of the chain corresponds to 674–966; the sequence is FLAIINDSYS…GGNGSANVHA (293 aa). Residues 748–783 enclose the EF-hand domain; that stretch reads HTDAEIEAIFTKYDQDGDQELTEREHQQMRDDLEKE. 5 residues coordinate Ca(2+): Asp-761, Asp-763, Asp-765, Glu-767, and Glu-772. Residues 764–828 form a disordered region; the sequence is GDQELTEREH…GHSSRRRGSI (65 aa). Over residues 768–793 the composition is skewed to basic and acidic residues; that stretch reads LTEREHQQMRDDLEKEREDLDLEHSS. Residues 794–805 show a composition bias toward low complexity; the sequence is LPRPMSSRSFPR. 4 positions are modified to phosphoserine: Ser-799, Ser-806, Ser-810, and Ser-827. Residues 801-820 form a linker region; the sequence is RSFPRSLDDSEEEDDEDSGH. Residues 808–819 form an important for interaction with PACS1 and PACS2 region; that stretch reads DDSEEEDDEDSG. A coiled-coil region spans residues 831-870; it reads GVSYEEFQVLVRRVDRMEHSIGSIVSKIDAVIVKLEIMER. A disordered region spans residues 914–966; sequence WESDDAASQTGHGVSTQVGLGGQPHPRNPRPPSSQSAEGLEGGGGNGSANVHA. Polar residues predominate over residues 919 to 931; sequence AASQTGHGVSTQV.

It belongs to the polycystin family. As to quaternary structure, homotetramer. Component of the heterotetrameric polycystin channel complex with PKD1; the tetramer contains one PKD1 chain and three PKD2 chains. Interaction with PKD1 is required for ciliary localization. Isoform 1 interacts with PKD1 while isoform 3 does not. Interacts with PKD1L1. Interacts with CD2AP. Interacts with HAX1. Interacts with NEK8. Part of a complex containing AKAP5, ADCY5, ADCY6 and PDE4C. Interacts (via C-terminus) with TRPV4 (via C-terminus). Interacts (via C-terminal acidic region) with PACS1 and PACS2; these interactions retain the protein in the endoplasmic reticulum and prevent trafficking to the cell membrane. Interacts with TMEM33; enhancing its opening at the ER membrane. Interacts with TMEM120A; TMEM120A inhibits PKD2 channel activity through the physical association of PKD2 with TMEM120A. Interacts (via N-terminus) with RYR2; regulates RYR2 channel activity. In terms of processing, N-glycosylated. The four subunits in a tetramer probably differ in the extent of glycosylation; simultaneous glycosylation of all experimentally validated sites would probably create steric hindrance. Post-translationally, sumoylated by SUMO1; sumoylation regulates PKD2 membrane recycling and is necessary for intravascular pressure-induced arterial contractility. Phosphorylated. Phosphorylation is important for protein function; a mutant that lacks the N-terminal phosphorylation sites cannot complement a zebrafish pkd2-deficient mutant. PKD-mediated phosphorylation at the C-terminus regulates its function in the release of Ca(2+) stores from the endoplasmic reticulum. Phosphorylation at Ser-810 regulates PKD2 trafficking. Phosphorylation at Ser-72 is required for PKD2 trafficking to or retention at the lateral plasma membrane. Phosphorylation at Ser-799, Ser-810 and Ser-827 regulates PKD2 channel activity. As to expression, detected in kidney epithelium (at protein level). Highly expressed on basolateral membranes in distal convoluted tubules and medullary thick ascending limbs of Henle. Detected at much lower levels in cortical and medullary collecting tubules, and not detected in the glomerular tuft, in thin limbs of Henle, interstitium and blood vessels (at protein level). Expressed in mesenchymally derived structures in the developing embryo at day 12.5. Isoform 1 is predominantly expressed in kidney at all developmental stages with high levels also detected in lung. Isoform 3 shows highest expression in brain with lower expression in kidney and lung, low levels in thymus and is hardly detectable in liver.

It localises to the cell projection. It is found in the cilium membrane. The protein resides in the cell membrane. The protein localises to the basolateral cell membrane. Its subcellular location is the cytoplasmic vesicle membrane. It localises to the endoplasmic reticulum membrane. It is found in the golgi apparatus. The protein resides in the vesicle. The protein localises to the secreted. Its subcellular location is the extracellular exosome. It carries out the reaction K(+)(in) = K(+)(out). It catalyses the reaction Na(+)(in) = Na(+)(out). The catalysed reaction is Ca(2+)(in) = Ca(2+)(out). Its activity is regulated as follows. Channel activity is regulated by phosphorylation. The channel is activated by increased cytoplasmic Ca(2+) (in the uM range) and by membrane depolarization. TMEM120A inhibits the channel activity of PKD2, and mediates mechanosensitivity of the PKD2-TMEM120A channel complex. At the endoplasmic reticulum membrane (ER), TMEM33 enhances its channel activity. PKD1/ PKD2 complex on the plasma membrane is activated by PKD1 N-terminus. Its function is as follows. Forms a nonselective cation channel. Can function as a homotetrameric ion channel or can form heteromer with PKD1. Displays distinct function depending on its subcellular localization and regulation by its binding partners. Functions as a cation channel, with a preference for monovalent cations over divalent cations that allows K(+), Na(+) and Ca(2+) influx, with low selectivity for Ca(2+). Involved in fluid-flow mechanosensation by the primary cilium in renal epithelium. In the endoplasmic reticulum, likely functions as a K(+) channel to facilitate Ca(2+) release. The heterotetrameric PKD1/PKD2 channel has higher Ca(2+) permeability than homomeric PKD2 channel and acts as a primarily Ca(2+)-permeable channel. PKD1 and PKD2 may function through a common signaling pathway that is necessary to maintain the normal, differentiated state of renal tubule cells. Interacts with and acts as a regulator of a number of other channels, such as TRPV4, TRPC1, IP3R, RYR2, ultimately further affecting intracellular signaling, to modulate intracellular Ca(2+) signaling. Together with TRPV4, forms mechano- and thermosensitive channels in cilium. In cardiomyocytes, PKD2 modulates Ca(2+) release from stimulated RYR2 receptors through direct association. Also involved in left-right axis specification via its role in sensing nodal flow; forms a complex with PKD1L1 in cilia to facilitate flow detection in left-right patterning. Acts as a regulator of cilium length together with PKD1. Mediates systemic blood pressure and contributes to the myogenic response in cerebral arteries though vasoconstriction. The protein is Polycystin-2 of Mus musculus (Mouse).